The following is a 668-amino-acid chain: Threonine--tRNA ligase (668 aa).

Residues 1–64 (MSEAIFLTFP…ADGKIEIITR (64 aa)) form the TGS domain. The interval 245 to 553 (DHRKLGREMD…LIENFAGHLP (309 aa)) is catalytic. Zn(2+) contacts are provided by cysteine 347, histidine 398, and histidine 530.

The protein belongs to the class-II aminoacyl-tRNA synthetase family. As to quaternary structure, homodimer. The cofactor is Zn(2+).

It is found in the cytoplasm. The catalysed reaction is tRNA(Thr) + L-threonine + ATP = L-threonyl-tRNA(Thr) + AMP + diphosphate + H(+). Functionally, catalyzes the attachment of threonine to tRNA(Thr) in a two-step reaction: L-threonine is first activated by ATP to form Thr-AMP and then transferred to the acceptor end of tRNA(Thr). Also edits incorrectly charged L-seryl-tRNA(Thr). This chain is Threonine--tRNA ligase, found in Rhizobium leguminosarum bv. trifolii (strain WSM2304).